The following is a 322-amino-acid chain: Coelomocyte uptake defective protein 15 (322 aa).

Positions 1–20 are cleaved as a signal peptide; that stretch reads MVNSLSRILFCSLLIFSVIS. Residues N62, N98, N144, N170, N180, N183, and N222 are each glycosylated (N-linked (GlcNAc...) asparagine). A helical membrane pass occupies residues 244–264; that stretch reads LFGIMITFGTLLLLTALFYAA.

It belongs to the OSTM1 family.

It localises to the membrane. Modulates the transport of substances from the endosomal to lysosomal compartments. Plays a role in lysosome formation and function in coelomocytes. The chain is Coelomocyte uptake defective protein 15 from Caenorhabditis elegans.